The following is a 147-amino-acid chain: Ubiquitin-conjugating enzyme E2 D4 (147 aa).

One can recognise a UBC core domain in the interval 1-147 (MALKRIQKEL…AREWTQKYAM (147 aa)). The Glycyl thioester intermediate role is filled by Cys-85.

The protein belongs to the ubiquitin-conjugating enzyme family. In terms of assembly, interacts with map3k10/mlk2. In terms of tissue distribution, at embryonic stages 28 to 35, expressed in the somites, eye primordia, otic vesicle and branchial arches. By stage 35, also weakly expressed in the pronephros.

The enzyme catalyses S-ubiquitinyl-[E1 ubiquitin-activating enzyme]-L-cysteine + [E2 ubiquitin-conjugating enzyme]-L-cysteine = [E1 ubiquitin-activating enzyme]-L-cysteine + S-ubiquitinyl-[E2 ubiquitin-conjugating enzyme]-L-cysteine.. It functions in the pathway protein modification; protein ubiquitination. Its function is as follows. Catalyzes the covalent attachment of ubiquitin to other proteins. Regulates pronephros development, possibly by promoting ubiquitination and thus inactivation or degradation of map3k10/mlk2. The sequence is that of Ubiquitin-conjugating enzyme E2 D4 (ube2d4) from Xenopus laevis (African clawed frog).